The chain runs to 208 residues: uncharacterized protein (208 aa).

To E.coli YfjJ.

This is an uncharacterized protein from Escherichia coli (strain K12).